Here is a 256-residue protein sequence, read N- to C-terminus: HTH-type transcriptional regulator PrtR (256 aa).

The 54-residue stretch at L16 to L69 folds into the HTH cro/C1-type domain. Residues Q27–S46 constitute a DNA-binding region (H-T-H motif).

Its function is as follows. Represses the promoter activity of the prtN gene. The chain is HTH-type transcriptional regulator PrtR (prtR) from Pseudomonas aeruginosa (strain ATCC 15692 / DSM 22644 / CIP 104116 / JCM 14847 / LMG 12228 / 1C / PRS 101 / PAO1).